Here is a 116-residue protein sequence, read N- to C-terminus: Probable prefoldin subunit 2 (116 aa).

The protein belongs to the prefoldin subunit beta family. As to quaternary structure, heterohexamer of two PFD-alpha type and four PFD-beta type subunits.

Its function is as follows. Binds specifically to cytosolic chaperonin (c-CPN) and transfers target proteins to it. Binds to nascent polypeptide chain and promotes folding in an environment in which there are many competing pathways for nonnative proteins. This chain is Probable prefoldin subunit 2 (pfdn2), found in Dictyostelium discoideum (Social amoeba).